We begin with the raw amino-acid sequence, 208 residues long: Holliday junction branch migration complex subunit RuvA (208 aa).

Positions 1–64 (MIGRLHGTVA…DDGQALYGFA (64 aa)) are domain I. The interval 65 to 143 (SRAERDLFRV…GLLPAASGGV (79 aa)) is domain II. A disordered region spans residues 139–162 (ASGGVPARTGSGEQLDAPAGPQGS). The interval 144–157 (PARTGSGEQLDAPA) is flexible linker. A domain III region spans residues 158 to 208 (GPQGSREDAVSALVALGYKPAEAGRLVNAVPGANDLPSEELIRRALQAAVR).

It belongs to the RuvA family. Homotetramer. Forms an RuvA(8)-RuvB(12)-Holliday junction (HJ) complex. HJ DNA is sandwiched between 2 RuvA tetramers; dsDNA enters through RuvA and exits via RuvB. An RuvB hexamer assembles on each DNA strand where it exits the tetramer. Each RuvB hexamer is contacted by two RuvA subunits (via domain III) on 2 adjacent RuvB subunits; this complex drives branch migration. In the full resolvosome a probable DNA-RuvA(4)-RuvB(12)-RuvC(2) complex forms which resolves the HJ.

Its subcellular location is the cytoplasm. Functionally, the RuvA-RuvB-RuvC complex processes Holliday junction (HJ) DNA during genetic recombination and DNA repair, while the RuvA-RuvB complex plays an important role in the rescue of blocked DNA replication forks via replication fork reversal (RFR). RuvA specifically binds to HJ cruciform DNA, conferring on it an open structure. The RuvB hexamer acts as an ATP-dependent pump, pulling dsDNA into and through the RuvAB complex. HJ branch migration allows RuvC to scan DNA until it finds its consensus sequence, where it cleaves and resolves the cruciform DNA. This is Holliday junction branch migration complex subunit RuvA from Alkalilimnicola ehrlichii (strain ATCC BAA-1101 / DSM 17681 / MLHE-1).